The sequence spans 152 residues: Snaclec anticoagulant protein subunit A (152 aa).

Positions 1–23 (MGRFIFVSFGLLVVYLSLSGTAA) are cleaved as a signal peptide. The 129-residue stretch at 24-152 (DCSSSWSSYE…EQRDPFVCEA (129 aa)) folds into the C-type lectin domain. Intrachain disulfides connect Cys-25–Cys-36, Cys-53–Cys-150, and Cys-125–Cys-142. Ca(2+)-binding residues include Ser-64, Glu-66, and Glu-70. Position 151 (Glu-151) interacts with Ca(2+).

It belongs to the snaclec family. As to quaternary structure, heterodimer of subunits A and B; disulfide-linked. Expressed by the venom gland.

It localises to the secreted. Its function is as follows. Anticoagulant protein which binds to the gamma-carboxyglutamic acid-domain regions of factors IX and factor X in the presence of calcium with a 1 to 1 stoichiometry. Also inhibits platelet aggregation by binding to platelet glycoprotein Ibalpha (GP1BA) and functioning as a blocker of vWF. Is devoid of hemorrhagic and lethal activities. Possesses antithrombotic and thrombolytic activities. Also hydrolyzes the Aalpha-chain of fibrinogen. Does not affect the Bbeta-chain and the gamma chain. The polypeptide is Snaclec anticoagulant protein subunit A (Deinagkistrodon acutus (Hundred-pace snake)).